The chain runs to 235 residues: tRNA pseudouridine synthase B (235 aa).

Asp48 serves as the catalytic Nucleophile.

This sequence belongs to the pseudouridine synthase TruB family. Type 1 subfamily.

The catalysed reaction is uridine(55) in tRNA = pseudouridine(55) in tRNA. Its function is as follows. Responsible for synthesis of pseudouridine from uracil-55 in the psi GC loop of transfer RNAs. The chain is tRNA pseudouridine synthase B from Parabacteroides distasonis (strain ATCC 8503 / DSM 20701 / CIP 104284 / JCM 5825 / NCTC 11152).